Here is a 250-residue protein sequence, read N- to C-terminus: Cell division protein ZapD (250 aa).

This sequence belongs to the ZapD family. In terms of assembly, interacts with FtsZ.

The protein localises to the cytoplasm. Functionally, cell division factor that enhances FtsZ-ring assembly. Directly interacts with FtsZ and promotes bundling of FtsZ protofilaments, with a reduction in FtsZ GTPase activity. The chain is Cell division protein ZapD from Photorhabdus laumondii subsp. laumondii (strain DSM 15139 / CIP 105565 / TT01) (Photorhabdus luminescens subsp. laumondii).